Consider the following 150-residue polypeptide: Thyroid hormone-inducible hepatic protein (150 aa).

The segment at 83 to 104 is disordered; it reads KVAGNETSEAENDAAETEEAEE. Serine 90 is subject to Phosphoserine. The span at 90 to 104 shows a compositional bias: acidic residues; that stretch reads SEAENDAAETEEAEE.

This sequence belongs to the SPOT14 family. In terms of assembly, homodimer. Heterodimer with MID1IP1. Interacts with THRB and PLAGL1. Mainly expressed in tissues that synthesize triglycerides.

The protein resides in the nucleus. Its subcellular location is the cytoplasm. Its function is as follows. Plays a role in the regulation of lipogenesis, especially in lactating mammary gland. Important for the biosynthesis of triglycerides with medium-length fatty acid chains. May modulate lipogenesis by interacting with MID1IP1 and preventing its interaction with ACACA. May function as transcriptional coactivator. May modulate the transcription factor activity of THRB. This is Thyroid hormone-inducible hepatic protein (Thrsp) from Mus musculus (Mouse).